The primary structure comprises 252 residues: Adenosine 5'-phosphosulfate reductase (252 aa).

C125, C126, C208, and C211 together coordinate [4Fe-4S] cluster. Positions 219-252 (DGYSREGRWSDRDKTECGLHTSPEDEDGAHAAES) are disordered. Positions 221-235 (YSREGRWSDRDKTEC) are enriched in basic and acidic residues. Residue C235 is the Nucleophile; cysteine thiosulfonate intermediate of the active site.

The protein belongs to the PAPS reductase family. CysH subfamily. The cofactor is [4Fe-4S] cluster.

It localises to the cytoplasm. The enzyme catalyses [thioredoxin]-disulfide + sulfite + AMP + 2 H(+) = adenosine 5'-phosphosulfate + [thioredoxin]-dithiol. It participates in sulfur metabolism; hydrogen sulfide biosynthesis; sulfite from sulfate. Functionally, catalyzes the formation of sulfite from adenosine 5'-phosphosulfate (APS) using thioredoxin as an electron donor. This Salinibacter ruber (strain DSM 13855 / M31) protein is Adenosine 5'-phosphosulfate reductase.